Reading from the N-terminus, the 315-residue chain is Protein SHORT INTERNODES 1 (315 aa).

Residues 1–10 are compositionally biased toward gly residues; it reads MAGFPLGGGS. Disordered regions lie at residues 1-24 and 64-92; these read MAGF…PPVH and PPAP…GGGG. The segment covering 70–82 has biased composition (low complexity); sequence AGASSSSSSRGMR. Residues 83–92 are compositionally biased toward gly residues; it reads SSGGGGGGGG. Residues Cys97, Cys100, Cys108, Cys113, Cys117, and Cys124 each contribute to the Zn(2+) site. A DNA-binding region (zn(2)-C6 fungal-type; degenerate) is located at residues 97–124; the sequence is CQDCGNQAKKDCTHMRCRTCCKSRGFAC. Composition is skewed to low complexity over residues 143-156 and 172-182; these read QQLA…AATA and RPSATTPTTSS. A disordered region spans residues 143-186; that stretch reads QQLAALAASAAATAGGAGPSRDPTKRPRARPSATTPTTSSGDQQ. A Required for homo- and heterodimerization motif is present at residues 227–230; that stretch reads IGGH.

Belongs to the SHI protein family. In terms of assembly, forms homodimers (via C-terminus). Interacts with SPL14/IPA1 (via C-terminus). In terms of tissue distribution, predominantly expressed in axillary buds and young panicles.

The protein localises to the nucleus. Its function is as follows. Regulates tillering and panicle branching by modulating SPL14/IPA1 transcriptional activity on the downstream TB1 and DEP1 target genes. Binds directly to the 5'-T/GCTCTAC-3' DNA motif found in the promoter regions of both TB1 and DEP1. Represses the DNA binding activity of SPL14/IPA1 toward the promoters of both TB1 and DEP1. Exhibits weak transcriptional activation activity in yeast cells. This is Protein SHORT INTERNODES 1 from Oryza sativa subsp. japonica (Rice).